The primary structure comprises 359 residues: Histidinol-phosphate aminotransferase (359 aa).

An N6-(pyridoxal phosphate)lysine modification is found at lysine 217.

The protein belongs to the class-II pyridoxal-phosphate-dependent aminotransferase family. Histidinol-phosphate aminotransferase subfamily. Homodimer. The cofactor is pyridoxal 5'-phosphate.

It carries out the reaction L-histidinol phosphate + 2-oxoglutarate = 3-(imidazol-4-yl)-2-oxopropyl phosphate + L-glutamate. The protein operates within amino-acid biosynthesis; L-histidine biosynthesis; L-histidine from 5-phospho-alpha-D-ribose 1-diphosphate: step 7/9. This Salmonella heidelberg (strain SL476) protein is Histidinol-phosphate aminotransferase.